We begin with the raw amino-acid sequence, 928 residues long: Mating-type protein A-alpha Y4 (928 aa).

Positions 152–211 (GKRSRPKFHSEYTPVLELYFHFNAYPTYADRRILAEKTGMLTRQITVWFQNHRRRAKGPL) form a DNA-binding region, homeobox. Disordered stretches follow at residues 255 to 296 (KSLA…EAGP), 310 to 329 (DSVS…SQQN), 340 to 359 (TATK…AGQP), 406 to 451 (YAYV…HRVS), and 626 to 736 (ARRK…EQDL). Over residues 344-353 (EKRRKMKKLP) the composition is skewed to basic residues. The segment covering 635-657 (KALEEKQAKKDRKERQKASRSQR) has biased composition (basic and acidic residues). Low complexity-rich tracts occupy residues 668-682 (SRAS…LPAR) and 694-728 (ESAA…SMPG).

It is found in the nucleus. Functionally, specifies A-alpha-4 mating-type. May regulate the expression of genes specific to the homokaryotic cell type. This is Mating-type protein A-alpha Y4 from Schizophyllum commune (Split gill fungus).